Consider the following 293-residue polypeptide: Glutamyl-Q tRNA(Asp) synthetase (293 aa).

L-glutamate contacts are provided by residues Arg-9 to Ser-13 and Glu-45. The 'HIGH' region motif lies at Pro-12–Ser-22. Zn(2+)-binding residues include Cys-101, Cys-103, Tyr-115, and Cys-119. The L-glutamate site is built by Tyr-172 and Arg-190. Residues Lys-228–Gln-232 carry the 'KMSKS' region motif. Position 231 (Lys-231) interacts with ATP.

This sequence belongs to the class-I aminoacyl-tRNA synthetase family. GluQ subfamily. The cofactor is Zn(2+).

In terms of biological role, catalyzes the tRNA-independent activation of glutamate in presence of ATP and the subsequent transfer of glutamate onto a tRNA(Asp). Glutamate is transferred on the 2-amino-5-(4,5-dihydroxy-2-cyclopenten-1-yl) moiety of the queuosine in the wobble position of the QUC anticodon. This is Glutamyl-Q tRNA(Asp) synthetase from Shewanella frigidimarina (strain NCIMB 400).